The primary structure comprises 406 residues: Proteasome-activating nucleotidase 1 (406 aa).

Positions methionine 1–tyrosine 12 are enriched in acidic residues. Positions methionine 1–aspartate 20 are disordered. The stretch at tyrosine 12 to serine 70 forms a coiled coil. ATP is bound by residues glycine 192 to leucine 197 and histidine 331. The tract at residues alanine 385–alanine 406 is disordered. The tract at residues threonine 404–alanine 406 is docks into pockets in the proteasome alpha-ring to cause gate opening.

Belongs to the AAA ATPase family. As to quaternary structure, homohexamer. The hexameric complex has a two-ring architecture resembling a top hat that caps the 20S proteasome core at one or both ends. Upon ATP-binding, the C-terminus of PAN interacts with the alpha-rings of the proteasome core by binding to the intersubunit pockets.

It is found in the cytoplasm. Functionally, ATPase which is responsible for recognizing, binding, unfolding and translocation of substrate proteins into the archaeal 20S proteasome core particle. Is essential for opening the gate of the 20S proteasome via an interaction with its C-terminus, thereby allowing substrate entry and access to the site of proteolysis. Thus, the C-termini of the proteasomal ATPase function like a 'key in a lock' to induce gate opening and therefore regulate proteolysis. Unfolding activity requires energy from ATP hydrolysis, whereas ATP binding alone promotes ATPase-20S proteasome association which triggers gate opening, and supports translocation of unfolded substrates. The sequence is that of Proteasome-activating nucleotidase 1 from Halobacterium salinarum (strain ATCC 700922 / JCM 11081 / NRC-1) (Halobacterium halobium).